We begin with the raw amino-acid sequence, 293 residues long: uncharacterized protein (293 aa).

2 disordered regions span residues 1 to 114 (MFLR…IPKL) and 268 to 293 (EETA…GRML). A phosphoserine mark is found at S34, S35, and S89. 2 stretches are compositionally biased toward basic and acidic residues: residues 73–95 (SSRD…RDKT) and 277–293 (GQER…GRML).

This is an uncharacterized protein from Mus musculus (Mouse).